The primary structure comprises 231 residues: Large ribosomal subunit protein uL1 (231 aa).

It belongs to the universal ribosomal protein uL1 family. As to quaternary structure, part of the 50S ribosomal subunit.

Its function is as follows. Binds directly to 23S rRNA. The L1 stalk is quite mobile in the ribosome, and is involved in E site tRNA release. Functionally, protein L1 is also a translational repressor protein, it controls the translation of the L11 operon by binding to its mRNA. The sequence is that of Large ribosomal subunit protein uL1 from Staphylococcus haemolyticus (strain JCSC1435).